The following is a 206-amino-acid chain: Regulator of rDNA transcription 14 (206 aa).

The disordered stretch occupies residues 178–206; the sequence is FVKDHRYPGLTPGLAPVGLSDEEDSSEED. A phosphoserine mark is found at serine 197, serine 202, and serine 203. Positions 197 to 206 are enriched in acidic residues; sequence SDEEDSSEED.

Belongs to the RRT14 family.

It localises to the nucleus. It is found in the nucleolus. Its function is as follows. Involved in ribosome biogenesis, probably through modulation of rDNA transcription. This chain is Regulator of rDNA transcription 14 (RRT14), found in Saccharomyces cerevisiae (strain AWRI1631) (Baker's yeast).